The sequence spans 369 residues: uncharacterized protein (369 aa).

This is an uncharacterized protein from Archaeoglobus fulgidus (strain ATCC 49558 / DSM 4304 / JCM 9628 / NBRC 100126 / VC-16).